A 361-amino-acid chain; its full sequence is DNA replication and repair protein RecF (361 aa).

Residue Gly-30–Thr-37 coordinates ATP.

The protein belongs to the RecF family.

It localises to the cytoplasm. Functionally, the RecF protein is involved in DNA metabolism; it is required for DNA replication and normal SOS inducibility. RecF binds preferentially to single-stranded, linear DNA. It also seems to bind ATP. In Streptococcus gordonii (strain Challis / ATCC 35105 / BCRC 15272 / CH1 / DL1 / V288), this protein is DNA replication and repair protein RecF.